The primary structure comprises 100 residues: ATP synthase subunit c (100 aa).

2 consecutive transmembrane segments (helical) span residues 27–47 and 72–92; these read SVIA…IGMG and FIAL…TLIV.

It belongs to the ATPase C chain family. As to quaternary structure, F-type ATPases have 2 components, F(1) - the catalytic core - and F(0) - the membrane proton channel. F(1) has five subunits: alpha(3), beta(3), gamma(1), delta(1), epsilon(1). F(0) has three main subunits: a(1), b(2) and c(10-14). The alpha and beta chains form an alternating ring which encloses part of the gamma chain. F(1) is attached to F(0) by a central stalk formed by the gamma and epsilon chains, while a peripheral stalk is formed by the delta and b chains.

The protein resides in the cell inner membrane. In terms of biological role, f(1)F(0) ATP synthase produces ATP from ADP in the presence of a proton or sodium gradient. F-type ATPases consist of two structural domains, F(1) containing the extramembraneous catalytic core and F(0) containing the membrane proton channel, linked together by a central stalk and a peripheral stalk. During catalysis, ATP synthesis in the catalytic domain of F(1) is coupled via a rotary mechanism of the central stalk subunits to proton translocation. Functionally, key component of the F(0) channel; it plays a direct role in translocation across the membrane. A homomeric c-ring of between 10-14 subunits forms the central stalk rotor element with the F(1) delta and epsilon subunits. In Campylobacter concisus (strain 13826), this protein is ATP synthase subunit c.